Here is a 212-residue protein sequence, read N- to C-terminus: Pyridoxine/pyridoxamine 5'-phosphate oxidase (212 aa).

Residues 8–11 and lysine 66 each bind substrate; that span reads RREY. FMN is bound by residues 61-66, 76-77, arginine 82, lysine 83, and glutamine 105; these read RIVLLK and FT. The substrate site is built by tyrosine 123, arginine 127, and serine 131. Residues 140–141 and tryptophan 185 each bind FMN; that span reads QS. 191–193 contributes to the substrate binding site; the sequence is RLH. Residue arginine 195 participates in FMN binding.

It belongs to the pyridoxamine 5'-phosphate oxidase family. As to quaternary structure, homodimer. The cofactor is FMN.

The enzyme catalyses pyridoxamine 5'-phosphate + O2 + H2O = pyridoxal 5'-phosphate + H2O2 + NH4(+). It carries out the reaction pyridoxine 5'-phosphate + O2 = pyridoxal 5'-phosphate + H2O2. The protein operates within cofactor metabolism; pyridoxal 5'-phosphate salvage; pyridoxal 5'-phosphate from pyridoxamine 5'-phosphate: step 1/1. Its pathway is cofactor metabolism; pyridoxal 5'-phosphate salvage; pyridoxal 5'-phosphate from pyridoxine 5'-phosphate: step 1/1. Its function is as follows. Catalyzes the oxidation of either pyridoxine 5'-phosphate (PNP) or pyridoxamine 5'-phosphate (PMP) into pyridoxal 5'-phosphate (PLP). This Shewanella denitrificans (strain OS217 / ATCC BAA-1090 / DSM 15013) protein is Pyridoxine/pyridoxamine 5'-phosphate oxidase.